A 292-amino-acid chain; its full sequence is 4-hydroxy-tetrahydrodipicolinate synthase (292 aa).

A pyruvate-binding site is contributed by T46. Y134 serves as the catalytic Proton donor/acceptor. K162 acts as the Schiff-base intermediate with substrate in catalysis. I204 is a binding site for pyruvate.

The protein belongs to the DapA family. In terms of assembly, homotetramer; dimer of dimers.

The protein resides in the cytoplasm. The enzyme catalyses L-aspartate 4-semialdehyde + pyruvate = (2S,4S)-4-hydroxy-2,3,4,5-tetrahydrodipicolinate + H2O + H(+). It functions in the pathway amino-acid biosynthesis; L-lysine biosynthesis via DAP pathway; (S)-tetrahydrodipicolinate from L-aspartate: step 3/4. In terms of biological role, catalyzes the condensation of (S)-aspartate-beta-semialdehyde [(S)-ASA] and pyruvate to 4-hydroxy-tetrahydrodipicolinate (HTPA). In Moorella thermoacetica (strain ATCC 39073 / JCM 9320), this protein is 4-hydroxy-tetrahydrodipicolinate synthase.